Here is a 268-residue protein sequence, read N- to C-terminus: Oxygen-evolving enhancer protein 2-1, chloroplastic (268 aa).

The N-terminal 82 residues, 1–82, are a transit peptide targeting the chloroplast; the sequence is MASTQCFLHQ…IGSKVSPADA (82 aa).

This sequence belongs to the PsbP family.

The protein localises to the plastid. The protein resides in the chloroplast thylakoid membrane. Functionally, may be involved in the regulation of photosystem II. The polypeptide is Oxygen-evolving enhancer protein 2-1, chloroplastic (PSBP1) (Nicotiana tabacum (Common tobacco)).